The following is a 90-amino-acid chain: Small ribosomal subunit protein uS15c (90 aa).

Belongs to the universal ribosomal protein uS15 family. In terms of assembly, part of the 30S ribosomal subunit.

The protein resides in the plastid. Its subcellular location is the chloroplast. The chain is Small ribosomal subunit protein uS15c (rps15) from Lotus japonicus (Lotus corniculatus var. japonicus).